The primary structure comprises 44 residues: Antifungal protein R (44 aa).

The protein belongs to the thaumatin family.

Has antifungal activity. Inhibits the growth of Trichoderma viridae and Candida albicans. The chain is Antifungal protein R from Hordeum vulgare (Barley).